A 335-amino-acid polypeptide reads, in one-letter code: MTSLLDQLSSMTVVVADTGDLEAIRTFKPQDATTNPSLILAAAQIPAYQNLIDKSLQASRQRVGSFASAKEVVDEALDEVCVTFGKEILKIIPGRVSTEVDARLSFNTQATINKARKIIDLYKKVDISKERVLIKVASTWEGIKAAEVLESEGIHCNLTLLFGFSQAVACAEAGVTLISPFVGRILDWYKAETGKDSYAGEEDPGVVSVTKIFNYYKSNNYKTEVMGASFRNIDEILELAGCDLLTIAPKFLEQLENSDSKLTRKLDSLKPLPSETKIHLEEYDFRNMLKLDRMATEKLEEGIINFSKAIEQLEQLLSKRLSYIESGSNAELSIA.

Lys-135 (schiff-base intermediate with substrate) is an active-site residue.

This sequence belongs to the transaldolase family. Type 1 subfamily. In terms of assembly, homodimer.

It is found in the cytoplasm. The enzyme catalyses D-sedoheptulose 7-phosphate + D-glyceraldehyde 3-phosphate = D-erythrose 4-phosphate + beta-D-fructose 6-phosphate. It functions in the pathway carbohydrate degradation; pentose phosphate pathway; D-glyceraldehyde 3-phosphate and beta-D-fructose 6-phosphate from D-ribose 5-phosphate and D-xylulose 5-phosphate (non-oxidative stage): step 2/3. Its function is as follows. Transaldolase is important for the balance of metabolites in the pentose-phosphate pathway. The protein is Transaldolase of Prochlorococcus marinus (strain SARG / CCMP1375 / SS120).